Here is a 189-residue protein sequence, read N- to C-terminus: Movement protein (189 aa).

This sequence belongs to the tombusvirus/aureusvirus movement protein p22 family. As to quaternary structure, interacts with host protein HFI22. Phosphorylated.

Its subcellular location is the host membrane. Its function is as follows. Transports viral genome to neighboring plant cells directly through plasmosdesmata, without any budding. The movement protein allows efficient cell to cell propagation, by bypassing the host cell wall barrier. This Capsicum annuum (Capsicum pepper) protein is Movement protein.